The sequence spans 921 residues: Glutamate receptor 3.7 (921 aa).

The N-terminal stretch at 1–25 is a signal peptide; sequence MGLGIDPSVAITALIVVILVVPMDC. The Extracellular portion of the chain corresponds to 26–580; that stretch reads QRPQLVNIGA…WIFLRPFTSR (555 aa). N-linked (GlcNAc...) asparagine glycans are attached at residues N214, N300, N330, N369, N396, N478, and N568. The chain crosses the membrane as a helical span at residues 581-601; sequence LWCVVLVSFLVIAVVIWILEH. The Cytoplasmic segment spans residues 602–608; sequence RINEDFR. A helical transmembrane segment spans residues 609 to 629; sequence GPPRRQLSTMLLFSFSTLFKR. Over 630 to 640 the chain is Cytoplasmic; that stretch reads NQEDTISNLAR. A helical transmembrane segment spans residues 641-661; it reads LVMIVWLFLLMVLTASYTANL. Topologically, residues 662–822 are extracellular; sequence TSILTVQQLP…PEPNQLHLKS (161 aa). The chain crosses the membrane as a helical span at residues 823–843; it reads FKGLYLVCIAITVSAFLVFVL. Over 844–921 the chain is Cytoplasmic; that stretch reads RMIRQFVRYR…VQADTEVPRN (78 aa). Positions 896-921 are disordered; it reads FRRSDDSNNNPSHVGEVQADTEVPRN.

The protein belongs to the glutamate-gated ion channel (TC 1.A.10.1) family. May form heteromers. In terms of tissue distribution, expressed predominantly in leaves and siliques. Also detected in roots.

The protein resides in the membrane. Glutamate-gated receptor that probably acts as a non-selective cation channel. May be involved in light-signal transduction and calcium homeostasis via the regulation of calcium influx into cells. The polypeptide is Glutamate receptor 3.7 (GLR3.7) (Arabidopsis thaliana (Mouse-ear cress)).